Reading from the N-terminus, the 117-residue chain is Large ribosomal subunit protein bL19 (117 aa).

This sequence belongs to the bacterial ribosomal protein bL19 family.

Its function is as follows. This protein is located at the 30S-50S ribosomal subunit interface and may play a role in the structure and function of the aminoacyl-tRNA binding site. The polypeptide is Large ribosomal subunit protein bL19 (Shewanella halifaxensis (strain HAW-EB4)).